The sequence spans 602 residues: Elongation factor 4 (602 aa).

The tr-type G domain maps to 7 to 188; the sequence is ENIRNFSIIA…AIIDLVPPPK (182 aa). GTP contacts are provided by residues 19-24 and 135-138; these read DHGKST and NKID.

This sequence belongs to the TRAFAC class translation factor GTPase superfamily. Classic translation factor GTPase family. LepA subfamily.

Its subcellular location is the cell inner membrane. The enzyme catalyses GTP + H2O = GDP + phosphate + H(+). Functionally, required for accurate and efficient protein synthesis under certain stress conditions. May act as a fidelity factor of the translation reaction, by catalyzing a one-codon backward translocation of tRNAs on improperly translocated ribosomes. Back-translocation proceeds from a post-translocation (POST) complex to a pre-translocation (PRE) complex, thus giving elongation factor G a second chance to translocate the tRNAs correctly. Binds to ribosomes in a GTP-dependent manner. This chain is Elongation factor 4, found in Chlamydia pneumoniae (Chlamydophila pneumoniae).